The primary structure comprises 402 residues: RNA-binding protein 42 (402 aa).

The tract at residues 240–275 is disordered; it reads ETASDDSVIGPSMPEPEPVHVEPVDTSTEDKKKGKQ. A compositionally biased stretch (basic and acidic residues) spans 256–275; the sequence is EPVHVEPVDTSTEDKKKGKQ. Residues 303–381 enclose the RRM domain; sequence FRIFCGDLGN…RPIKLRKSAW (79 aa).

The protein belongs to the RRM RBM42 family.

The protein resides in the nucleus. It is found in the cytoplasm. In terms of biological role, may bind RNA. The polypeptide is RNA-binding protein 42 (rbm42) (Danio rerio (Zebrafish)).